Consider the following 408-residue polypeptide: Solute carrier family 35 member F1 (408 aa).

The interval methionine 1–proline 20 is disordered. 10 helical membrane-spanning segments follow: residues methionine 60 to threonine 80, valine 94 to valine 114, tryptophan 129 to valine 147, glutamine 159 to isoleucine 179, phenylalanine 186 to valine 206, leucine 221 to isoleucine 241, valine 247 to isoleucine 267, leucine 284 to isoleucine 304, serine 311 to phenylalanine 331, and phenylalanine 335 to serine 355.

It belongs to the SLC35F solute transporter family.

It localises to the cytoplasmic vesicle. The protein resides in the secretory vesicle. Its subcellular location is the synaptic vesicle membrane. Putative solute transporter. This Mus musculus (Mouse) protein is Solute carrier family 35 member F1 (Slc35f1).